Here is a 31-residue protein sequence, read N- to C-terminus: Dermaseptin-7.2TR (31 aa).

A Glutamic acid 1-amide modification is found at glutamate 31.

Expressed by the skin glands.

The protein resides in the secreted. Has antimicrobial activity. The sequence is that of Dermaseptin-7.2TR from Phyllomedusa trinitatis (Trinidad leaf frog).